Here is a 92-residue protein sequence, read N- to C-terminus: Small ribosomal subunit protein bS18 (92 aa).

The protein belongs to the bacterial ribosomal protein bS18 family. Part of the 30S ribosomal subunit. Forms a tight heterodimer with protein bS6.

Functionally, binds as a heterodimer with protein bS6 to the central domain of the 16S rRNA, where it helps stabilize the platform of the 30S subunit. The sequence is that of Small ribosomal subunit protein bS18 from Caulobacter sp. (strain K31).